Reading from the N-terminus, the 1323-residue chain is PAS domain-containing serine/threonine-protein kinase (1323 aa).

N-acetylmethionine is present on Met1. The residue at position 19 (Ser19) is a Phosphoserine. Residues 20–47 (LPLPVSAEGPAAQTTAEPSRSFSSAHRH) form a disordered region. Residues 31 to 43 (AQTTAEPSRSFSS) are compositionally biased toward polar residues. Thr34 is subject to Phosphothreonine. 2 consecutive PAS domains span residues 119–190 (SSPL…MEAD) and 335–402 (YRAS…SLQL). At Ser582 the chain carries Phosphoserine. The tract at residues 837 to 857 (AASDRESPGHVPSTLDAGPED) is disordered. Ser939 is modified (phosphoserine). The region spanning 999–1251 (YSTMSPLGSG…LEKLVTDPWV (253 aa)) is the Protein kinase domain. ATP contacts are provided by residues 1005–1013 (LGSGAFGFV), Lys1028, and 1082–1089 (EKHGSGLD). Catalysis depends on Asp1128, which acts as the Proton acceptor. Asp1146 is a binding site for ATP. 2 positions are modified to phosphothreonine; by autocatalysis: Thr1161 and Thr1165. The interval 1298–1323 (CGGPVPGEAPNGQGCLHPGDPRLLTS) is disordered.

It belongs to the protein kinase superfamily. CAMK Ser/Thr protein kinase family. In terms of processing, autophosphorylated on Thr-1161 and Thr-1165. Autophosphorylation is activated by phospholipids. As to expression, ubiquitously expressed, with slightly higher expression in brain, prostate and testis. Reduced expression was found in placenta. Present in germ cells of testis and in the midpiece of sperm tails (at protein level).

The protein resides in the cytoplasm. It localises to the nucleus. The catalysed reaction is L-seryl-[protein] + ATP = O-phospho-L-seryl-[protein] + ADP + H(+). It carries out the reaction L-threonyl-[protein] + ATP = O-phospho-L-threonyl-[protein] + ADP + H(+). Its activity is regulated as follows. Protein kinase activity is inhibited by the first PAS domain: binding of an unidentified ligand desinhibits the protein kinase activity. May be activated by autophosphorylation on Thr-1161 and Thr-1165. The activating role of autophosphorylation at Thr-1161 is unclear: according to a report, autophosphorylation at Thr-1161 does not play a major role in activation. Autophosphorylation is enhanced upon phosphatidylinositol monophosphate (phosphatidylinositol 4-phosphate) binding and inhibited upon phosphatidylinositol bi- and tri-phosphate binding. In contrast, phosphorylation of target proteins is inhibited upon all phosphatidylinositol-binding (phosphatidylinositol mono- bi- and tri-phosphate). Serine/threonine-protein kinase involved in energy homeostasis and protein translation. Phosphorylates EEF1A1, GYS1, PDX1 and RPS6. Probably plays a role under changing environmental conditions (oxygen, glucose, nutrition), rather than under standard conditions. Acts as a sensor involved in energy homeostasis: regulates glycogen synthase synthesis by mediating phosphorylation of GYS1, leading to GYS1 inactivation. May be involved in glucose-stimulated insulin production in pancreas and regulation of glucagon secretion by glucose in alpha cells; however such data require additional evidences. May play a role in regulation of protein translation by phosphorylating EEF1A1, leading to increase translation efficiency. May also participate in respiratory regulation. In Homo sapiens (Human), this protein is PAS domain-containing serine/threonine-protein kinase (PASK).